The chain runs to 95 residues: Aspartyl/glutamyl-tRNA(Asn/Gln) amidotransferase subunit C (95 aa).

Belongs to the GatC family. Heterotrimer of A, B and C subunits.

It catalyses the reaction L-glutamyl-tRNA(Gln) + L-glutamine + ATP + H2O = L-glutaminyl-tRNA(Gln) + L-glutamate + ADP + phosphate + H(+). The enzyme catalyses L-aspartyl-tRNA(Asn) + L-glutamine + ATP + H2O = L-asparaginyl-tRNA(Asn) + L-glutamate + ADP + phosphate + 2 H(+). In terms of biological role, allows the formation of correctly charged Asn-tRNA(Asn) or Gln-tRNA(Gln) through the transamidation of misacylated Asp-tRNA(Asn) or Glu-tRNA(Gln) in organisms which lack either or both of asparaginyl-tRNA or glutaminyl-tRNA synthetases. The reaction takes place in the presence of glutamine and ATP through an activated phospho-Asp-tRNA(Asn) or phospho-Glu-tRNA(Gln). The chain is Aspartyl/glutamyl-tRNA(Asn/Gln) amidotransferase subunit C from Cereibacter sphaeroides (strain ATCC 17025 / ATH 2.4.3) (Rhodobacter sphaeroides).